Here is a 157-residue protein sequence, read N- to C-terminus: Pyruvoyl-dependent arginine decarboxylase 2 (157 aa).

Ser43 is modified (pyruvic acid (Ser)).

Belongs to the PdaD family. It depends on pyruvate as a cofactor.

It carries out the reaction L-arginine + H(+) = agmatine + CO2. This chain is Pyruvoyl-dependent arginine decarboxylase 2 (pdaD2), found in Archaeoglobus fulgidus (strain ATCC 49558 / DSM 4304 / JCM 9628 / NBRC 100126 / VC-16).